The following is a 33-amino-acid chain: U-limacoditoxin(13)-As11 (33 aa).

Residues 1–19 (MFKLLLVLALTMLAQSALA) form the signal peptide. Phenylalanine 32 carries the post-translational modification Phenylalanine amide.

The protein belongs to the FARP (FMRFamide related peptide) family. Expressed by the venom secretory cell of the spine. The spine is a cuticular structure containing a single large nucleated venom-secreting cell at its base. It is an independent unit capable of producing, storing and injecting venom. On the back of A.stimulea caterpillars, spines are grouped together by 50 to 100 to form scoli, of which there are eight.

The protein resides in the secreted. Functionally, is toxic when injected into Drosophila melanogaster. Also shows a low anthelmintic activity against the parasitic nematode H.contortus (drug susceptible Kirby isolate). This chain is U-limacoditoxin(13)-As11, found in Acharia stimulea (Saddleback caterpillar moth).